Reading from the N-terminus, the 723-residue chain is ABC transporter F family member 4 (723 aa).

The segment at 1-117 (MGKKKSDESA…KEQKKREAKE (117 aa)) is disordered. The span at 18 to 31 (SGKDASKDSKKEKL) shows a compositional bias: basic and acidic residues. Polar residues predominate over residues 50–65 (GSSSRTKAAPKSTSYT). Acidic residues predominate over residues 72-84 (PSDEEDDGESDEE). The segment covering 95 to 117 (KSEQRHLEISVTDKEQKKREAKE) has biased composition (basic and acidic residues). One can recognise an ABC transporter 1 domain in the interval 163-423 (ITIESFSVSA…EMNKKFDVYD (261 aa)). Position 195 to 202 (195 to 202 (GPNGMGKS)) interacts with ATP. 2 disordered regions span residues 256–275 (LQKS…DDDD) and 427–472 (KAAK…APEA). The segment covering 266–275 (ENVDGEDDDD) has biased composition (acidic residues). Residues 437 to 446 (QQEKVKDRAK) are compositionally biased toward basic and acidic residues. The 226-residue stretch at 496 to 721 (LQLIEVSFSY…DLQREIKAEV (226 aa)) folds into the ABC transporter 2 domain. Residue 530–537 (GPNGAGKS) coordinates ATP.

Belongs to the ABC transporter superfamily. ABCF family. EF3 (TC 3.A.1.121) subfamily.

In Arabidopsis thaliana (Mouse-ear cress), this protein is ABC transporter F family member 4 (ABCF4).